The chain runs to 377 residues: 5-hydroxytryptamine receptor 1D (377 aa).

A disordered region spans residues 1 to 23 (MSPLNQSAEGLPQEASNRSLNAT). The Extracellular segment spans residues 1–38 (MSPLNQSAEGLPQEASNRSLNATETSEAWDPRTLQALK). N5, N17, and N21 each carry an N-linked (GlcNAc...) asparagine glycan. A helical transmembrane segment spans residues 39 to 64 (ISLAVVLSVITLATVLSNAFVLTTIL). The Cytoplasmic portion of the chain corresponds to 65–75 (LTRKLHTPANY). A helical membrane pass occupies residues 76–97 (LIGSLATTDLLVSILVMPISIA). Topologically, residues 98–109 (YTITHTWNFGQI) are extracellular. The chain crosses the membrane as a helical span at residues 110 to 134 (LCDIWLSSDITCCTASILHLCVIAL). An intrachain disulfide couples C111 to C188. 2 residues coordinate serotonin: D118 and C122. A DRY motif; important for ligand-induced conformation changes motif is present at residues 135–137 (DRY). Over 135-154 (DRYWAITDALEYSKRRTAGH) the chain is Cytoplasmic. Residues 155-176 (AATMIAIVWAISICISIPPLFW) form a helical membrane-spanning segment. Residues 177-194 (RQAKAQEEMSDCLVNTSQ) lie on the Extracellular side of the membrane. Residues 195 to 218 (ISYTIYSTCGAFYIPSVLLIILYG) traverse the membrane as a helical segment. At 219–300 (RIYRAARNRI…ISAARERKAT (82 aa)) the chain is on the cytoplasmic side. Residues 301–326 (KILGIILGAFIICWLPFFVVSLVLPI) form a helical membrane-spanning segment. S321 is a binding site for serotonin. At 327 to 335 (CRDSCWIHP) the chain is on the extracellular side. Residues 336–359 (ALFDFFTWLGYLNSLINPIIYTVF) form a helical membrane-spanning segment. The NPxxY motif; important for ligand-induced conformation changes and signaling motif lies at 352–356 (NPIIY). Residues 360–377 (NEEFRQAFQKIVPFRKAS) lie on the Cytoplasmic side of the membrane.

The protein belongs to the G-protein coupled receptor 1 family. As to quaternary structure, homodimer. Heterodimer with HTR1B. In terms of tissue distribution, detected in brain neocortex and caudate nucleus (at protein level).

Its subcellular location is the cell membrane. Its function is as follows. G-protein coupled receptor for 5-hydroxytryptamine (serotonin). Also functions as a receptor for ergot alkaloid derivatives, various anxiolytic and antidepressant drugs and other psychoactive substances. Ligand binding causes a conformation change that triggers signaling via guanine nucleotide-binding proteins (G proteins) and modulates the activity of downstream effectors, such as adenylate cyclase. HTR1D is coupled to G(i)/G(o) G alpha proteins and mediates inhibitory neurotransmission by inhibiting adenylate cyclase activity. Regulates the release of 5-hydroxytryptamine in the brain, and thereby affects neural activity. May also play a role in regulating the release of other neurotransmitters. May play a role in vasoconstriction. The chain is 5-hydroxytryptamine receptor 1D from Homo sapiens (Human).